The chain runs to 841 residues: Beta-adaptin-like protein A (841 aa).

Disordered stretches follow at residues 1–25 (MAPPAASQRYPSPSQPSGKSEVSDL) and 650–671 (DENKGVSNNNGSAYTAPSLESS). Polar residues-rich tracts occupy residues 9–25 (RYPSPSQPSGKSEVSDL) and 654–671 (GVSNNNGSAYTAPSLESS).

The protein belongs to the adaptor complexes large subunit family. Adaptor protein complexes are heterotetramers composed of two large adaptins (beta-type subunit and alpha-type or delta-type or epsilon-type or gamma-type subunit), a medium adaptin (mu-type subunit) and a small adaptin (sigma-type subunit). Interacts with AHK2.

The protein localises to the golgi apparatus. Its subcellular location is the trans-Golgi network. It is found in the cytoplasmic vesicle. It localises to the clathrin-coated vesicle membrane. Its function is as follows. Subunit of clathrin-associated adaptor protein complex that plays a role in protein sorting in the late-Golgi/trans-Golgi network (TGN) and/or endosomes. The AP complexes mediate both the recruitment of clathrin to membranes and the recognition of sorting signals within the cytosolic tails of transmembrane cargo molecules. In Arabidopsis thaliana (Mouse-ear cress), this protein is Beta-adaptin-like protein A (BETAA-AD).